The primary structure comprises 675 residues: Protein PALS1 (675 aa).

The disordered stretch occupies residues 1-78 (MTTSHMNGHV…RREEEGKKQE (78 aa)). Residues 1 to 345 (MTTSHMNGHV…QQIKPPPAKE (345 aa)) are required for the correct localization of PALS1 and PATJ at cell-cell contacts and the normal formation of tight junctions and adherens junctions. 2 stretches are compositionally biased toward basic and acidic residues: residues 10–36 (VTEE…REMA) and 54–78 (AQLE…KKQE). Ser-14 and Ser-25 each carry phosphoserine. An interaction with PARD6B region spans residues 21-140 (VDLASPEEHQ…LKHIQHTLVD (120 aa)). A phosphoserine mark is found at Ser-83 and Ser-84. 2 L27 domains span residues 120–177 (KILE…NKAS) and 179–235 (PFPL…MQLE). Residues 181–243 (PLISNAQDLA…LEPFTDERVY (63 aa)) are interaction with LIN7C. Positions 256–336 (IVRIEKARDI…TLTFVLIPSQ (81 aa)) constitute a PDZ domain. The SH3 domain maps to 345-417 (ETVIHVKAHF…PGKSFQQQRE (73 aa)). The region spanning 479–660 (KRPIILIGPQ…AYQELLRLIN (182 aa)) is the Guanylate kinase-like domain. 486–493 (GPQNCGQN) is a binding site for ATP.

The protein belongs to the MAGUK family. Heterodimer with MPP1. Forms a heterotrimeric complex composed of PALS1, LIN7B and PATJ; the N-terminal L27 domain of PALS1 interacts with the L27 domain of PATJ and the C-terminal L27 domain of PALS1 interacts with the L27 domain of LIN7B. Component of a complex composed of PALS1, CRB1 and MPP4. Component of a complex whose core is composed of ARHGAP17, AMOT, PALS1, PATJ and PARD3/PAR3. Component of a complex composed of PALS1, CRB1 and EPB41L5. Within the complex, interacts (via HOOK domain) with EPB41L5 (via FERM domain), and interacts with CRB1 (via intracellular domain). Component of a complex composed of PALS1, MPP3 and CRB1; PALS1 acts as a bridging protein between MPP3 (via guanylate kinase-like domain) and CRB1. Component of a complex composed of CRB3, PALS1 and PATJ. As part of the Crumbs complex; interacts with WWP1, the interaction is enhanced by AMOTL2 and facilitates WWP1 localization to the plasma membrane. The Crumbs complex promotes monoubiquitination of AMOTL2 by WWP1, which activates the Hippo signaling pathway. Interacts (via PDZ domain) with PATJ (via N-terminus). Interacts with EZR. Interacts (via PDZ domain) with CRB1 (via C-terminal ERLI motif). While the PDZ domain is sufficient for interaction with CRB1, the adjacent SH3 and guanylate kinase-like domains are likely to contribute to a high affinity interaction. Interacts with WWTR1/TAZ (via WW domain). Interacts with MPP7. Interacts (via PDZ domain) with CRB3 (via C-terminus). Interacts with LIN7C. Interacts with MPDZ. Interacts with PARD6B. Interacts with SC6A1. Interacts with CDH5; the interaction promotes PALS1 localization to cell junctions and is required for CDH5-mediated vascular lumen formation and endothelial cell. Interacts with NPHP1 (via coiled coil and SH3 domains). Interacts with NPHP4. Interacts with CRB2.

The protein resides in the golgi apparatus. It is found in the cell membrane. Its subcellular location is the endomembrane system. It localises to the cell junction. The protein localises to the tight junction. The protein resides in the adherens junction. It is found in the cell projection. Its subcellular location is the axon. It localises to the perikaryon. The protein localises to the apical cell membrane. Its function is as follows. Plays a role in tight junction biogenesis and in the establishment of cell polarity in epithelial cells. Also involved in adherens junction biogenesis by ensuring correct localization of the exocyst complex protein EXOC4/SEC8 which allows trafficking of adherens junction structural component CDH1 to the cell surface. Plays a role through its interaction with CDH5 in vascular lumen formation and endothelial membrane polarity. Required during embryonic and postnatal retinal development. Required for the maintenance of cerebellar progenitor cells in an undifferentiated proliferative state, preventing premature differentiation, and is required for cerebellar histogenesis, fissure formation, cerebellar layer organization and cortical development. Plays a role in neuronal progenitor cell survival, potentially via promotion of mTOR signaling. Plays a role in the radial and longitudinal extension of the myelin sheath in Schwann cells. May modulate SC6A1/GAT1-mediated GABA uptake by stabilizing the transporter. May play a role in the T-cell receptor-mediated activation of NF-kappa-B. Required for localization of EZR to the apical membrane of parietal cells and may play a role in the dynamic remodeling of the apical cytoskeleton. Required for the normal polarized localization of the vesicular marker STX4. Required for the correct trafficking of the myelin proteins PMP22 and MAG. Involved in promoting phosphorylation and cytoplasmic retention of transcriptional coactivators YAP1 and WWTR1/TAZ which leads to suppression of TGFB1-dependent transcription of target genes such as CCN2/CTGF, SERPINE1/PAI1, SNAI1/SNAIL1 and SMAD7. The sequence is that of Protein PALS1 from Canis lupus familiaris (Dog).